The chain runs to 120 residues: Large ribosomal subunit protein eL18 (120 aa).

This sequence belongs to the eukaryotic ribosomal protein eL18 family.

This chain is Large ribosomal subunit protein eL18, found in Pyrococcus horikoshii (strain ATCC 700860 / DSM 12428 / JCM 9974 / NBRC 100139 / OT-3).